We begin with the raw amino-acid sequence, 413 residues long: L-arginine-specific L-amino acid ligase (413 aa).

In terms of domain architecture, ATP-grasp spans 115–312 (KTKLKMEGIP…LWESSLNISV (198 aa)). Residue 141–202 (GEKLGWPIIV…EKCIEMEEFH (62 aa)) participates in ATP binding. Residues E268 and E281 each coordinate Mg(2+). Residues E268 and E281 each coordinate Mn(2+).

Homodimer. It depends on Mg(2+) as a cofactor. Requires Mn(2+) as cofactor. Co(2+) serves as cofactor.

It catalyses the reaction an L-alpha-amino acid + L-arginine + ATP = L-arginyl-L-alpha-amino acid + ADP + phosphate + H(+). Its function is as follows. Catalyzes the synthesis of Arg-Xaa dipeptides in an ATP-dependent manner. Has strict specificity toward arginine as the N-terminal substrate. This Bacillus subtilis protein is L-arginine-specific L-amino acid ligase.